We begin with the raw amino-acid sequence, 1321 residues long: MQKIKEGYRRRHDYIIPKFISFQSGYLDFSFYQVSLKNVKYLDLSSYYQLHAPRRFRKIVEYLNLSYGQLLTLGTLPKYVMSLDLSSYNQLFTPGRLPIRVSLDLSSYNQLFTPGRLPDTVDYLKLSSYNQLFTPGTLPNHMVYLNLSSYNQPLTPGTLPNKVKYLVLSSYNQLLTPGTLPNNVKYVDLSSYNKLLTPETLPNKVKYLVLSSYDQLLTPGTLPNNVKCVDLSSYDKLLTPGTLPNNVKYVDLSSYNKLLTPRTLPNNVECLVLSSYNQLLTPGILPNYVKYLDISSYNQLLTPGTLSNNVEYLDLSSYNQVLAPKTIPNNVKCLDCPSYKQSLISETFPNRVGDLELSDHPKHVNDNWEIIKPQKNISENKVYYTTKHKNAKIIDVLNICKCSLKLYGYVKDRNNEFNIYFEYIDKAIPLSRLLEKLNKKEQFIVATEIIKSIKSIHEMGIIHFDIKCQNILILYDENEKMLPTDFIKIIGFDHSTLDSEVNSNIIGVTETHMAPEIKLKNGKLGYKSDIWSLGCTLIEIVGGNLKLLDINGIPLIPDHLSNLFKNTIQHCLQINPNARFNANELYNYVIKDSIMEPIEPIYLPNQCTNLPLFNEVIVPSGFFGIKYLELQAYNQPIDSIFIFNGVEYLILQSFNHPLGPGILPESIKYLKLPSFNHPLKEGSIPRSVIHLVFNKFNQFSLDEINLILPKFLDFGDAFDIEKYGILIPEDSILTLRTGFTFNQPINQRYIPSSVTDLQLYNYNLKILPHSIPRSIIMLTLGSNFTHFESLSNLPSSIINLTFGFKNNFKIAELKKYIPSHITSININGKIVNFKKSSPLNTFNQSTDNILNNNEHFKEDWEIISTLGSGNFGKVFKARKINGIINGSKVSLCAIKKIEKKDKLKIKLSTEVEILNKLKDNEHSMKYYGYGYDEDDNLFIYTEYIEGSTSISDLIKKKPNNRFEEEEIKSLMIKIVKALSKIHESGVIHRDIKSDHIILAQDKNNETIVKFIDFGLSKQIEKNSKYYSFVGTDSHMAPEVKLQNGKAGSKSDIFCIGCTMIEMAGLNLCHSERDDKGIPSIPTHLSNSFKNIIQNCLKFDTNARHSVESLIITLSNIQIEGDSVFEKYLSPNLKKLELKTNEPILLGSIGNEINYLSLPIYNQMITPGALPPSVQYLLFNKLNQYLECDSIPESVKYLDLGNEFDIEKNGINLSNESILVLRCGFNFTQPVSQRLLPYSVTDLQLYNYNINLKRNSIPTLVTSLTLGSNFTNIESLSFLPENVNSLAIGIKDEDEKLTKEIEKIIQTKKSITSFKINGIQRN.

FNIP repeat units follow at residues 108-149 (YNQL…NLSS), 150-191 (YNQP…DLSS), 192-233 (YNKL…DLSS), and 255-296 (YNKL…DISS). The Protein kinase 1 domain maps to 295-595 (SSYNQLLTPG…YNYVIKDSIM (301 aa)). ATP is bound by residues 301-309 (LTPGTLSNN) and K325. The active-site Proton acceptor is the D465. FNIP repeat units lie at residues 654–696 (FNHP…FNKF) and 741–783 (FNQP…LGSN). Residues 860–1128 (WEIISTLGSG…EGDSVFEKYL (269 aa)) enclose the Protein kinase 2 domain. ATP contacts are provided by residues 866-874 (LGSGNFGKV) and K895. The Proton acceptor role is filled by D990. FNIP repeat units follow at residues 1160–1202 (YNQM…LGNE) and 1224–1268 (FNFT…LGSN).

It belongs to the protein kinase superfamily. STE Ser/Thr protein kinase family. It depends on Mg(2+) as a cofactor.

It carries out the reaction L-seryl-[protein] + ATP = O-phospho-L-seryl-[protein] + ADP + H(+). The enzyme catalyses L-threonyl-[protein] + ATP = O-phospho-L-threonyl-[protein] + ADP + H(+). This Dictyostelium discoideum (Social amoeba) protein is Probable serine/threonine-protein kinase fnkE.